Here is a 377-residue protein sequence, read N- to C-terminus: Nitric oxide reductase FlRd-NAD(+) reductase (377 aa).

This sequence belongs to the FAD-dependent oxidoreductase family. FAD is required as a cofactor.

It localises to the cytoplasm. The enzyme catalyses 2 reduced [nitric oxide reductase rubredoxin domain] + NAD(+) + H(+) = 2 oxidized [nitric oxide reductase rubredoxin domain] + NADH. Its pathway is nitrogen metabolism; nitric oxide reduction. Functionally, one of at least two accessory proteins for anaerobic nitric oxide (NO) reductase. Reduces the rubredoxin moiety of NO reductase. The chain is Nitric oxide reductase FlRd-NAD(+) reductase from Shigella dysenteriae serotype 1 (strain Sd197).